The chain runs to 372 residues: N-methyl-L-tryptophan oxidase (372 aa).

4-34 (DLIIIGSGSVGAAAGYYATRAGLNVLMTDAH) contacts FAD. Cys308 carries the S-8alpha-FAD cysteine modification.

It belongs to the MSOX/MTOX family. MTOX subfamily. Monomer. It depends on FAD as a cofactor.

The catalysed reaction is N(alpha)-methyl-L-tryptophan + O2 + H2O = L-tryptophan + formaldehyde + H2O2. Its function is as follows. Catalyzes the oxidative demethylation of N-methyl-L-tryptophan. This is N-methyl-L-tryptophan oxidase from Escherichia coli O157:H7.